The primary structure comprises 42 residues: Photosystem I reaction center subunit IX (42 aa).

The helical transmembrane segment at Phe-7 to Ile-27 threads the bilayer.

The protein belongs to the PsaJ family.

Its subcellular location is the cellular thylakoid membrane. In terms of biological role, may help in the organization of the PsaE and PsaF subunits. The chain is Photosystem I reaction center subunit IX from Gloeothece citriformis (strain PCC 7424) (Cyanothece sp. (strain PCC 7424)).